A 145-amino-acid polypeptide reads, in one-letter code: Superoxide dismutase [Mn/Fe] (145 aa).

Histidine 10 and histidine 64 together coordinate Fe(3+). The Mn(2+) site is built by histidine 10 and histidine 64. Positions 126 to 145 are disordered; it reads TSTANQDTPISEGKKPILGL.

It belongs to the iron/manganese superoxide dismutase family. Requires Mn(2+) as cofactor. The cofactor is Fe(3+).

It carries out the reaction 2 superoxide + 2 H(+) = H2O2 + O2. In terms of biological role, destroys superoxide anion radicals which are normally produced within the cells and which are toxic to biological systems. Catalyzes the dismutation of superoxide anion radicals into O2 and H2O2 by successive reduction and oxidation of the transition metal ion at the active site. This Streptococcus mitis protein is Superoxide dismutase [Mn/Fe] (sodA).